The primary structure comprises 23 residues: Alpha-conotoxin-like RgIB (23 aa).

2 cysteine pairs are disulfide-bonded: C5–C11 and C6–C19. Residues K7–P9 form a lacks the Ser-Xaa-Pro motif that is crucial for potent interaction with nAChR region.

As to expression, expressed by venom duct.

It is found in the secreted. Its function is as follows. Alpha-conotoxins act on postsynaptic membranes, they bind to the nicotinic acetylcholine receptors (nAChR) and thus inhibit them. Is a specific blocker of the alpha-3-beta-4/CHRNA3-CHRNB4 image nAChR and may also block alpha-3-beta-4-alpha-5 (CHRNA3-CHRNB4-CHRNA5) channels. Has possibly a distinct nAChR binding mode from other alpha-conotoxins, due to a different three residue motif (lacks the Ser-Xaa-Pro motif). In vivo, causes hyperactivity and behavioral disorders in mice following intracranial injection. In Conus regius (Crown cone), this protein is Alpha-conotoxin-like RgIB.